The sequence spans 276 residues: Ribosomal RNA small subunit methyltransferase A (276 aa).

S-adenosyl-L-methionine contacts are provided by N24, L26, G51, E72, D97, and N118.

It belongs to the class I-like SAM-binding methyltransferase superfamily. rRNA adenine N(6)-methyltransferase family. RsmA subfamily.

Its subcellular location is the cytoplasm. The catalysed reaction is adenosine(1518)/adenosine(1519) in 16S rRNA + 4 S-adenosyl-L-methionine = N(6)-dimethyladenosine(1518)/N(6)-dimethyladenosine(1519) in 16S rRNA + 4 S-adenosyl-L-homocysteine + 4 H(+). In terms of biological role, specifically dimethylates two adjacent adenosines (A1518 and A1519) in the loop of a conserved hairpin near the 3'-end of 16S rRNA in the 30S particle. May play a critical role in biogenesis of 30S subunits. The chain is Ribosomal RNA small subunit methyltransferase A from Clostridium acetobutylicum (strain ATCC 824 / DSM 792 / JCM 1419 / IAM 19013 / LMG 5710 / NBRC 13948 / NRRL B-527 / VKM B-1787 / 2291 / W).